The chain runs to 592 residues: Dictomallein-1 (592 aa).

Residues 1–19 (MKILIILLVFLNLITNINC) form the signal peptide. In terms of domain architecture, Peptidase M66 spans 140–402 (PNIGHETNLN…QNYFKDSIIY (263 aa)). H294 lines the Zn(2+) pocket. E295 is a catalytic residue. Zn(2+)-binding residues include H298 and H304.

The protein belongs to the dictomallein family. Zn(2+) is required as a cofactor.

It is found in the secreted. The chain is Dictomallein-1 (dtmlA) from Dictyostelium discoideum (Social amoeba).